A 300-amino-acid chain; its full sequence is Protein sprouty homolog 4 (300 aa).

Met-1 carries the post-translational modification N-acetylmethionine. 2 disordered regions span residues 1–28 (MEPP…SRAP) and 52–114 (DYID…RLLD). Low complexity-rich tracts occupy residues 7–21 (QSSV…MVQP) and 92–108 (SFSG…STSS). A Phosphoserine modification is found at Ser-126. An SPR domain is found at 167–274 (KCKECASPRT…GYDRLRRPGC (108 aa)).

This sequence belongs to the sprouty family. As to quaternary structure, interacts (via C-terminus) with TESK1 (via both C- and N-termini); the interaction inhibits TESK1 kinase activity. Interacts with RAF1. Interacts with CAV1 (via C-terminus). In terms of tissue distribution, expressed in the embryo and adult tissues including heart, brain, lung, kidney, and skeletal muscle.

Its subcellular location is the cytoplasm. The protein resides in the cell projection. It is found in the ruffle membrane. Suppresses the insulin receptor and EGFR-transduced MAPK signaling pathway, but does not inhibit MAPK activation by a constitutively active mutant Ras. Probably impairs the formation of GTP-Ras. Inhibits Ras-independent, but not Ras-dependent, activation of RAF1. Represses integrin-mediated cell spreading via inhibition of TESK1-mediated phosphorylation of cofilin. The protein is Protein sprouty homolog 4 (Spry4) of Mus musculus (Mouse).